The sequence spans 605 residues: UvrABC system protein C (605 aa).

Positions 13-92 (SEPGVYLMKD…IKRYRPKYNV (80 aa)) constitute a GIY-YIG domain. In terms of domain architecture, UVR spans 205–240 (EKLMELLKEKMNESSMNFRFEEAAVYRDKIKSLEEM).

The protein belongs to the UvrC family. In terms of assembly, interacts with UvrB in an incision complex.

It localises to the cytoplasm. Functionally, the UvrABC repair system catalyzes the recognition and processing of DNA lesions. UvrC both incises the 5' and 3' sides of the lesion. The N-terminal half is responsible for the 3' incision and the C-terminal half is responsible for the 5' incision. The polypeptide is UvrABC system protein C (Clostridioides difficile (strain 630) (Peptoclostridium difficile)).